The chain runs to 497 residues: Signal recognition particle receptor FtsY (497 aa).

2 disordered regions span residues methionine 1–glutamate 63 and alanine 79–alanine 130. The span at glutamate 87–proline 96 shows a compositional bias: low complexity. Residues glycine 300–threonine 307, aspartate 382–arginine 386, and threonine 446–aspartate 449 contribute to the GTP site.

This sequence belongs to the GTP-binding SRP family. FtsY subfamily. In terms of assembly, part of the signal recognition particle protein translocation system, which is composed of SRP and FtsY. SRP is a ribonucleoprotein composed of Ffh and a 4.5S RNA molecule. Binds to SecY. Proteolytically cleaved. The cleavage may regulate function and subcellular location of FtsY. Full-length FtsY is found primarily associated with the membrane, while cleaved protein is predominantly present in the cytoplasm.

Its subcellular location is the cell inner membrane. It localises to the cytoplasm. It catalyses the reaction GTP + H2O = GDP + phosphate + H(+). Conformation of the Ffh-FtsY complex and regulation of its GTPase activity are modulated by the 4.5S RNA. Formation of the FfH-FtsY complex leads to a mutual stimulation of both GTPases. Functionally, involved in targeting and insertion of nascent membrane proteins into the cytoplasmic membrane. Acts as a receptor for the complex formed by the signal recognition particle (SRP) and the ribosome-nascent chain (RNC). Interaction with SRP-RNC leads to the transfer of the RNC complex to the Sec translocase for insertion into the membrane, the hydrolysis of GTP by both Ffh and FtsY, and the dissociation of the SRP-FtsY complex into the individual components. This chain is Signal recognition particle receptor FtsY, found in Escherichia coli (strain K12).